The sequence spans 1254 residues: Ubiquitin carboxyl-terminal hydrolase 12 (1254 aa).

At serine 84 the chain carries Phosphoserine. Positions 97–199 (NVLEQQRDVV…GSYPVVTNLV (103 aa)) constitute a DUSP domain. The region spanning 364-1110 (TGLVNLGNTC…SAYLLFYIRR (747 aa)) is the USP domain. The active-site Nucleophile is the cysteine 373. The tract at residues 827–893 (DEGDTEGSEA…EPELTDKPEA (67 aa)) is disordered. Positions 854–864 (TVTNNENVNNT) are enriched in low complexity. Residues 867–883 (RDEDMELTDDVEEDAST) are compositionally biased toward acidic residues. The active-site Proton acceptor is the histidine 1068. Residue serine 1160 is modified to Phosphoserine. The disordered stretch occupies residues 1188–1207 (QDCNDEDDNDDGERTNSGRR). Positions 1189-1198 (DCNDEDDNDD) are enriched in acidic residues.

The protein belongs to the peptidase C19 family. In terms of assembly, interacts with FZO1.

It catalyses the reaction Thiol-dependent hydrolysis of ester, thioester, amide, peptide and isopeptide bonds formed by the C-terminal Gly of ubiquitin (a 76-residue protein attached to proteins as an intracellular targeting signal).. Ubiquitin carboxyl-terminal hydrolase that recognizes ubiquitin chains that stabilize FZO1 and promote mitochondrial fusion. UBP12 deubiquitylates FZO1 only after oligomerization. The protein is Ubiquitin carboxyl-terminal hydrolase 12 (UBP12) of Saccharomyces cerevisiae (strain ATCC 204508 / S288c) (Baker's yeast).